Reading from the N-terminus, the 426-residue chain is Glutamate-1-semialdehyde 2,1-aminomutase (426 aa).

N6-(pyridoxal phosphate)lysine is present on K263.

The protein belongs to the class-III pyridoxal-phosphate-dependent aminotransferase family. HemL subfamily. Homodimer. Pyridoxal 5'-phosphate serves as cofactor.

Its subcellular location is the cytoplasm. It carries out the reaction (S)-4-amino-5-oxopentanoate = 5-aminolevulinate. It participates in porphyrin-containing compound metabolism; protoporphyrin-IX biosynthesis; 5-aminolevulinate from L-glutamyl-tRNA(Glu): step 2/2. The polypeptide is Glutamate-1-semialdehyde 2,1-aminomutase (Caldicellulosiruptor bescii (strain ATCC BAA-1888 / DSM 6725 / KCTC 15123 / Z-1320) (Anaerocellum thermophilum)).